We begin with the raw amino-acid sequence, 290 residues long: Endonuclease 2 (290 aa).

The signal sequence occupies residues 1-27 (MANQKGLHVVMMIITVWLLYAAPNIHG). Positions 28 and 33 each coordinate a divalent metal cation. Substrate is bound at residue 28 to 33 (WGKEGH). A disulfide bridge connects residues Cys37 and Cys68. Residues Asp72 and His85 each coordinate a divalent metal cation. Substrate contacts are provided by residues 72–76 (DRVKF), 85–88 (HYIN), and 94–99 (SYQYNR). 3 disulfide bridges follow: Cys93/Cys245, Cys101/Cys111, and Cys226/Cys232. 2 residues coordinate substrate: Asn118 and Tyr136. Asn118 carries an N-linked (GlcNAc...) asparagine glycan. Residue Asn137 is glycosylated (N-linked (GlcNAc...) asparagine). The a divalent metal cation site is built by His147, Asp151, His157, His181, and Asp185. The segment at 147–196 (HFMGDIHQPLHVSYASDKGGNTIEVHWYTRKANLHHIWDSNIIETAEADL) is substrate binding. Asn211 carries an N-linked (GlcNAc...) asparagine glycan. The propeptide at 283 to 290 (ATLNRIFG) is removed in mature form.

The protein belongs to the nuclease type I family. In terms of assembly, monomer. Mn(2+) is required as a cofactor. Requires Ca(2+) as cofactor. It depends on Zn(2+) as a cofactor. Post-translationally, N-glycosylation is required for enzymatic stability and activity.

It catalyses the reaction Endonucleolytic cleavage to 5'-phosphomononucleotide and 5'-phosphooligonucleotide end-products.. Its activity is regulated as follows. ssDNase activity is inhibited by the divalent cation chelator EDTA and the reducing agent DTT. Divalent metal ions (e.g. Ca(2+), Mg(2+) and Zn(2+)) and DTT represses RNase activity. RNase activity is enhanced by EDTA. Also repressed by vanadate (VO(4)(3-)) and phosphate (PO(4)(3-)) by occupying the active site. Its function is as follows. Endonuclease mostly active on RNA and ssDNA, and to a lower extent, on dsDNA. Can cleave mismatch regions in heteroduplex DNA containing single base pair mismatches or insertion/deletion bases. In contradiction with PubMed:22506810, cannot hydrolyze single-stranded DNA and does not cleave mismatches. This Arabidopsis thaliana (Mouse-ear cress) protein is Endonuclease 2.